We begin with the raw amino-acid sequence, 408 residues long: Histidine--tRNA ligase (408 aa).

This sequence belongs to the class-II aminoacyl-tRNA synthetase family. As to quaternary structure, homodimer.

It localises to the cytoplasm. It catalyses the reaction tRNA(His) + L-histidine + ATP = L-histidyl-tRNA(His) + AMP + diphosphate + H(+). This is Histidine--tRNA ligase from Campylobacter lari (strain RM2100 / D67 / ATCC BAA-1060).